A 646-amino-acid chain; its full sequence is Altered inheritance of mitochondria protein 9, mitochondrial (646 aa).

A mitochondrion-targeting transit peptide spans 1–34; the sequence is MLRIPSRIGSRQVLACAGRNLKCGSVMRHISRRN.

Belongs to the AIM9 family.

Its subcellular location is the mitochondrion. In Candida glabrata (strain ATCC 2001 / BCRC 20586 / JCM 3761 / NBRC 0622 / NRRL Y-65 / CBS 138) (Yeast), this protein is Altered inheritance of mitochondria protein 9, mitochondrial (AIM9).